Here is a 310-residue protein sequence, read N- to C-terminus: Ninja-family protein 3 (310 aa).

Disordered stretches follow at residues 1–29 (MASRDFLGRFGGEKGASSDKAGGGAGEPD), 68–140 (SLPG…DDAQ), and 156–215 (DQGN…EQPP). The span at 99 to 108 (ERWRRREMQS) shows a compositional bias: basic and acidic residues. 2 stretches are compositionally biased toward polar residues: residues 156-166 (DQGNASSSMPE) and 176-193 (KSTSSMEISSDNNNQNKS).

It belongs to the Ninja family.

It is found in the nucleus. In Triticum aestivum (Wheat), this protein is Ninja-family protein 3 (AFP-D1).